The sequence spans 529 residues: Bifunctional purine biosynthesis protein PurH (529 aa).

An MGS-like domain is found at 2–149; sequence TNLVPVGRAL…KNHRFVNVVT (148 aa).

This sequence belongs to the PurH family.

It carries out the reaction (6R)-10-formyltetrahydrofolate + 5-amino-1-(5-phospho-beta-D-ribosyl)imidazole-4-carboxamide = 5-formamido-1-(5-phospho-D-ribosyl)imidazole-4-carboxamide + (6S)-5,6,7,8-tetrahydrofolate. The enzyme catalyses IMP + H2O = 5-formamido-1-(5-phospho-D-ribosyl)imidazole-4-carboxamide. Its pathway is purine metabolism; IMP biosynthesis via de novo pathway; 5-formamido-1-(5-phospho-D-ribosyl)imidazole-4-carboxamide from 5-amino-1-(5-phospho-D-ribosyl)imidazole-4-carboxamide (10-formyl THF route): step 1/1. The protein operates within purine metabolism; IMP biosynthesis via de novo pathway; IMP from 5-formamido-1-(5-phospho-D-ribosyl)imidazole-4-carboxamide: step 1/1. This is Bifunctional purine biosynthesis protein PurH from Cereibacter sphaeroides (strain ATCC 17025 / ATH 2.4.3) (Rhodobacter sphaeroides).